Reading from the N-terminus, the 536-residue chain is Membrane protein insertase YidC (536 aa).

The helical transmembrane segment at 7–27 threads the bilayer; it reads IIAVVLSLFVLIGWSYLSEFM. Residues 43-70 are disordered; sequence VQQKASEPVAQPVQTASAPAASSFAPTE. Residues 58 to 68 show a composition bias toward low complexity; it reads ASAPAASSFAP. The next 3 membrane-spanning stretches (helical) occupy residues 346-366, 415-435, and 495-515; these read GNYG…FWPL, GGCL…QGLL, and IMMF…AGLV.

Belongs to the OXA1/ALB3/YidC family. Type 1 subfamily. In terms of assembly, interacts with the Sec translocase complex via SecD. Specifically interacts with transmembrane segments of nascent integral membrane proteins during membrane integration.

The protein resides in the cell inner membrane. Its function is as follows. Required for the insertion and/or proper folding and/or complex formation of integral membrane proteins into the membrane. Involved in integration of membrane proteins that insert both dependently and independently of the Sec translocase complex, as well as at least some lipoproteins. Aids folding of multispanning membrane proteins. In Oleidesulfovibrio alaskensis (strain ATCC BAA-1058 / DSM 17464 / G20) (Desulfovibrio alaskensis), this protein is Membrane protein insertase YidC.